The chain runs to 126 residues: L-alanine exporter AlaE (126 aa).

A helical membrane pass occupies residues 23 to 43 (FALVVYCFFTGMAIEILLSGM).

It belongs to the AlaE exporter family.

The protein localises to the cell inner membrane. Exports L-alanine. This is L-alanine exporter AlaE from Sodalis glossinidius (strain morsitans).